Here is a 204-residue protein sequence, read N- to C-terminus: Recombination protein RecR (204 aa).

The C4-type zinc-finger motif lies at 58-75 (CSICQNVTDRDADPCRIC). Residues 83 to 181 (SVICVVESPV…MVTKIARGIP (99 aa)) enclose the Toprim domain.

It belongs to the RecR family.

Its function is as follows. May play a role in DNA repair. It seems to be involved in an RecBC-independent recombinational process of DNA repair. It may act with RecF and RecO. This is Recombination protein RecR from Chlorobium phaeovibrioides (strain DSM 265 / 1930) (Prosthecochloris vibrioformis (strain DSM 265)).